We begin with the raw amino-acid sequence, 316 residues long: Transaldolase (316 aa).

Lysine 131 functions as the Schiff-base intermediate with substrate in the catalytic mechanism.

It belongs to the transaldolase family. Type 1 subfamily. Homodimer.

The protein localises to the cytoplasm. The catalysed reaction is D-sedoheptulose 7-phosphate + D-glyceraldehyde 3-phosphate = D-erythrose 4-phosphate + beta-D-fructose 6-phosphate. It functions in the pathway carbohydrate degradation; pentose phosphate pathway; D-glyceraldehyde 3-phosphate and beta-D-fructose 6-phosphate from D-ribose 5-phosphate and D-xylulose 5-phosphate (non-oxidative stage): step 2/3. Its function is as follows. Transaldolase is important for the balance of metabolites in the pentose-phosphate pathway. The chain is Transaldolase from Buchnera aphidicola subsp. Acyrthosiphon pisum (strain 5A).